We begin with the raw amino-acid sequence, 1591 residues long: Rho guanine nucleotide exchange factor TIAM1 (1591 aa).

Residues 1-78 form a disordered region; that stretch reads MGNAESQHVE…AENGLEPFSQ (78 aa). Gly-2 carries N-myristoyl glycine lipidation. Residues 7–19 are compositionally biased toward basic and acidic residues; it reads QHVEHEFYGEKHA. Basic residues predominate over residues 20 to 49; it reads SLGRKHTSRSLRLSHKTRRTRHASSGKVIH. The segment covering 53–67 has biased composition (low complexity); that stretch reads EVSTRSSSTPSIPQS. A Phosphoserine modification is found at Ser-231. Disordered stretches follow at residues 298–379 and 393–422; these read SEGA…GDAA and MSTTNSESLEEAGSAHSDEQSSGTLSSPGQ. 2 stretches are compositionally biased toward polar residues: residues 300-313 and 340-361; these read GATNPQISHSNSMQ and TTDTDLLSRRSNATNSSYSPTT. 2 positions are modified to phosphoserine: Ser-356 and Ser-358. Positions 367–377 are enriched in low complexity; the sequence is GSDSGSSSTGD. The segment covering 412-422 has biased composition (polar residues); the sequence is QSSGTLSSPGQ. The 116-residue stretch at 434-549 folds into the PH 1 domain; that stretch reads VRKAGALAVK…TAIHSACATA (116 aa). At Ser-695 the chain carries Phosphoserine. Positions 765–832 constitute an RBD domain; it reads TPSWFCLPNN…QPEEDIYELL (68 aa). Tyr-829 carries the post-translational modification Phosphotyrosine; by NTRK2. A PDZ domain is found at 845–908; the sequence is SIHIEKSDTA…NNRAADALNS (64 aa). The disordered stretch occupies residues 939–1034; it reads SPPHRVDGPA…TGPQLATMRQ (96 aa). Residues 958 to 975 show a composition bias toward polar residues; sequence LTSNPGHSLCSEQGSSAE. Positions 977–990 are enriched in acidic residues; that stretch reads APEETEGPDLESSD. The span at 1014-1024 shows a compositional bias: low complexity; that stretch reads PSDQSPSPQDS. Positions 1025–1034 are enriched in polar residues; the sequence is TGPQLATMRQ. Positions 1040–1234 constitute a DH domain; sequence KLRKVICELL…NKVASHINEM (195 aa). The region spanning 1261 to 1397 is the PH 2 domain; it reads DLSMGDLLLH…KAVHSILRDK (137 aa). Tyr-1323 bears the Phosphotyrosine mark. Residues Lys-1404 and Lys-1420 each participate in a glycyl lysine isopeptide (Lys-Gly) (interchain with G-Cter in ubiquitin) cross-link. The segment at 1456-1482 is disordered; that stretch reads TIDSDAVSASSPEKESQQPPGGGDTDR. Ser-1519 carries the post-translational modification Phosphoserine.

This sequence belongs to the TIAM family. Component of the Par polarity complex, composed of at least phosphorylated PRKCZ, PARD3 and TIAM1. Interacts with NTRK2; mediates the activation of RAC1 by BDNF. Interacts with MAPK8IP2 and CD44. Interacts with BAIAP2. Interacts with EPHA8; regulates clathrin-mediated endocytosis of EPHA8. Interacts with PARD3. Interacts (via PDZ domain) with CNTNAP4, SDC1 and SDC3 (via C-terminus). In terms of processing, ubiquitinated. Undergoes 'Lys-48' ubiquitination at Lys-1404 and Lys-1420 by a CUL3(KBTBD6/7) E3 ubiquitin ligase complex composed of CUL3, RBX1, KBTBD6 and KBTBD7. 'Lys-48' ubiquitination at Lys-1404 and Lys-1420 triggers proteasomal degradation. Ubiquitination at Lys-1404 and Lys-1420 by CUL3(KBTBD6/7) also requires the membrane-associated protein GABARAP and may therefore be spatially restricted within the cell. Found in virtually all analyzed tumor cell lines including B- and T-lymphomas, neuroblastomas, melanomas and carcinomas.

It is found in the cell junction. It localises to the cell membrane. Functionally, guanyl-nucleotide exchange factor that activates RHO-like proteins and connects extracellular signals to cytoskeletal activities. Activates RAC1, CDC42, and to a lesser extent RHOA and their downstream signaling to regulate processes like cell adhesion and cell migration. The polypeptide is Rho guanine nucleotide exchange factor TIAM1 (Homo sapiens (Human)).